The following is a 346-amino-acid chain: Sensor histidine kinase GraS (346 aa).

The next 2 membrane-spanning stretches (helical) occupy residues 15 to 35 (MNWI…SLID) and 43 to 63 (LFYI…LTYF). The Histidine kinase domain occupies 126–332 (EFVHDIKTPV…TVRLIFPLQN (207 aa)).

In terms of assembly, interacts with GraX.

The protein localises to the cell membrane. It carries out the reaction ATP + protein L-histidine = ADP + protein N-phospho-L-histidine.. Functionally, member of the two-component regulatory system GraR/GraS involved in resistance against cationic antimicrobial peptides (CAMPs). Functions as a sensor protein kinase which phosphorylates GraR through the auxiliary protein GraX. In turn, GraR up-regulates many genes such as adhesins, exoproteins, transporters, toxins, and proteins involved in cell wall synthesis. Down-regulates the expression of many genes involved in RNA and amino acid synthesis or glycolysis. The chain is Sensor histidine kinase GraS (graS) from Staphylococcus aureus (strain Mu50 / ATCC 700699).